A 139-amino-acid polypeptide reads, in one-letter code: Large-conductance mechanosensitive channel (139 aa).

2 helical membrane passes run 16–36 (VIDLAVGVIIGAAFNGIVKSL) and 79–99 (GAFVNTVIQFFIVATVVFLLV).

The protein belongs to the MscL family. In terms of assembly, homopentamer.

The protein resides in the cell inner membrane. Channel that opens in response to stretch forces in the membrane lipid bilayer. May participate in the regulation of osmotic pressure changes within the cell. In Caulobacter vibrioides (strain ATCC 19089 / CIP 103742 / CB 15) (Caulobacter crescentus), this protein is Large-conductance mechanosensitive channel.